A 245-amino-acid chain; its full sequence is tRNA1(Val) (adenine(37)-N6)-methyltransferase (245 aa).

Belongs to the methyltransferase superfamily. tRNA (adenine-N(6)-)-methyltransferase family.

It is found in the cytoplasm. It catalyses the reaction adenosine(37) in tRNA1(Val) + S-adenosyl-L-methionine = N(6)-methyladenosine(37) in tRNA1(Val) + S-adenosyl-L-homocysteine + H(+). Its function is as follows. Specifically methylates the adenine in position 37 of tRNA(1)(Val) (anticodon cmo5UAC). This Salmonella arizonae (strain ATCC BAA-731 / CDC346-86 / RSK2980) protein is tRNA1(Val) (adenine(37)-N6)-methyltransferase.